Here is a 212-residue protein sequence, read N- to C-terminus: MAYAYLFKYIIIGDTGVGKSCLLLQFTDKRFQPVHDLTIGVEFGARMITIDGKQIKLQIWDTAGQESFRSITRSYYRGAAGALLVYDITRRDTFNHLTTWLEDARQHSNSNMVIMLIGNKSDLESRREVKKEEGEAFAREHGLIFMETSAKTASNVEEAFINTAKEIYEKIQEGVFDINNEANGIKIGPQHAATNASHGSNQGGQQAGGGCC.

A2 is modified (N-acetylalanine). The interval 2–19 (AYAYLFKYIIIGDTGVGK) is required for interaction with PRKCI. GTP-binding residues include G16, V17, G18, K19, S20, C21, and T38. S20 contributes to the Mg(2+) binding site. The Switch 1 motif lies at 37–42 (LTIGVE). 2 residues coordinate Mg(2+): T38 and D61. The Switch 2 motif lies at 63-72 (AGQESFRSIT). Residues G64, N119, K120, D122, A150, and K151 each coordinate GTP. A disordered region spans residues 190–212 (QHAATNASHGSNQGGQQAGGGCC). Over residues 201–212 (NQGGQQAGGGCC) the composition is skewed to gly residues. 2 S-geranylgeranyl cysteine lipidation sites follow: C211 and C212.

It belongs to the small GTPase superfamily. Rab family. In terms of assembly, interacts with PRKCI. Interacts with TRIP11. Interacts (in GTP-bound form) with GARIN1B. Interacts (GTP-bound) with HOPS complex component VPS39; interaction contributes to obtaining a functional HOPS complex that promotes autophagosome-lysosome membrane fusion driven by STX17-SNAP29-VAMP8. Interacts with VPS41. Requires Mg(2+) as cofactor. In terms of processing, prenylated. Prenylation is required for association with cellular membranes.

It is found in the endoplasmic reticulum-Golgi intermediate compartment membrane. The protein localises to the melanosome. It localises to the endoplasmic reticulum membrane. Its subcellular location is the golgi apparatus membrane. The protein resides in the cytoplasmic vesicle. It is found in the secretory vesicle. The protein localises to the acrosome. It localises to the autophagosome membrane. It carries out the reaction GTP + H2O = GDP + phosphate + H(+). With respect to regulation, regulated by guanine nucleotide exchange factors (GEFs) which promote the exchange of bound GDP for free GTP, GTPase activating proteins (GAPs) which increase the GTP hydrolysis activity, and GDP dissociation inhibitors (GDIs) which inhibit the dissociation of the nucleotide from the GTPase. Functionally, the small GTPases Rab are key regulators of intracellular membrane trafficking, from the formation of transport vesicles to their fusion with membranes. Rabs cycle between active GTP-bound and inactive GDP-bound states. In their active state, drive transport of vesicular carriers from donor organelles to acceptor organelles to regulate the membrane traffic that maintains organelle identity and morphology. RAB2A regulates autophagy by promoting autophagosome-lysosome fusion via recruitment of the HOPS endosomal tethering complex; this process involves autophagosomal RAB2A and lysosomal RAB39A recruitment of HOPS subcomplexes VPS39-VPS11 and VPS41-VPS16-VPS18-VPS33A, respectively, which assemble into a functional complex to mediate membrane tethering and SNAREs-driven membrane fusion. Required for protein transport from the endoplasmic reticulum to the Golgi complex. Regulates the compacted morphology of the Golgi. Together with RAB2B, redundantly required for efficient autophagic flux. The protein is Ras-related protein Rab-2A of Mus musculus (Mouse).